The sequence spans 366 residues: tRNA/tmRNA (uracil-C(5))-methyltransferase (366 aa).

5 residues coordinate S-adenosyl-L-methionine: Q190, Y218, N223, E239, and D299. C324 (nucleophile) is an active-site residue. The Proton acceptor role is filled by E358.

This sequence belongs to the class I-like SAM-binding methyltransferase superfamily. RNA M5U methyltransferase family. TrmA subfamily.

The catalysed reaction is uridine(54) in tRNA + S-adenosyl-L-methionine = 5-methyluridine(54) in tRNA + S-adenosyl-L-homocysteine + H(+). It carries out the reaction uridine(341) in tmRNA + S-adenosyl-L-methionine = 5-methyluridine(341) in tmRNA + S-adenosyl-L-homocysteine + H(+). Dual-specificity methyltransferase that catalyzes the formation of 5-methyluridine at position 54 (m5U54) in all tRNAs, and that of position 341 (m5U341) in tmRNA (transfer-mRNA). In Cellvibrio japonicus (strain Ueda107) (Pseudomonas fluorescens subsp. cellulosa), this protein is tRNA/tmRNA (uracil-C(5))-methyltransferase.